Consider the following 69-residue polypeptide: Small ribosomal subunit protein bS21 (69 aa).

This sequence belongs to the bacterial ribosomal protein bS21 family.

The chain is Small ribosomal subunit protein bS21 from Hyphomonas neptunium (strain ATCC 15444).